Reading from the N-terminus, the 226-residue chain is MNENLFATFITPTILGITTLPIIMLFPCLLLTSPKRWLPNRIQILQVWLIRLITKQMLTIHNKQGRSWALMLMSLILFIASTNLLGLLPYSFTPTTQLSMNIGMAIPLWLATVLMGFRNKPKISLAHFLPQGTPTPLVPMLIIIETISLFIQPVALAVRLTANITAGHLLIHLIGSATLALCSISVTVSTITFIILFLLTILELAVAMIQAYVFTLLVSLYLHDNS.

Transmembrane regions (helical) follow at residues 6-26, 68-88, 97-117, 138-158, 164-184, and 193-213; these read FATF…IMLF, WALM…LGLL, QLSM…LMGF, VPML…ALAV, ITAG…LCSI, and FIIL…QAYV.

It belongs to the ATPase A chain family. As to quaternary structure, component of the ATP synthase complex composed at least of ATP5F1A/subunit alpha, ATP5F1B/subunit beta, ATP5MC1/subunit c (homooctomer), MT-ATP6/subunit a, MT-ATP8/subunit 8, ATP5ME/subunit e, ATP5MF/subunit f, ATP5MG/subunit g, ATP5MK/subunit k, ATP5MJ/subunit j, ATP5F1C/subunit gamma, ATP5F1D/subunit delta, ATP5F1E/subunit epsilon, ATP5PF/subunit F6, ATP5PB/subunit b, ATP5PD/subunit d, ATP5PO/subunit OSCP. ATP synthase complex consists of a soluble F(1) head domain (subunits alpha(3) and beta(3)) - the catalytic core - and a membrane F(0) domain - the membrane proton channel (subunits c, a, 8, e, f, g, k and j). These two domains are linked by a central stalk (subunits gamma, delta, and epsilon) rotating inside the F1 region and a stationary peripheral stalk (subunits F6, b, d, and OSCP). Interacts with DNAJC30; interaction is direct.

The protein resides in the mitochondrion inner membrane. It carries out the reaction H(+)(in) = H(+)(out). In terms of biological role, subunit a, of the mitochondrial membrane ATP synthase complex (F(1)F(0) ATP synthase or Complex V) that produces ATP from ADP in the presence of a proton gradient across the membrane which is generated by electron transport complexes of the respiratory chain. ATP synthase complex consist of a soluble F(1) head domain - the catalytic core - and a membrane F(1) domain - the membrane proton channel. These two domains are linked by a central stalk rotating inside the F(1) region and a stationary peripheral stalk. During catalysis, ATP synthesis in the catalytic domain of F(1) is coupled via a rotary mechanism of the central stalk subunits to proton translocation. With the subunit c (ATP5MC1), forms the proton-conducting channel in the F(0) domain, that contains two crucial half-channels (inlet and outlet) that facilitate proton movement from the mitochondrial intermembrane space (IMS) into the matrix. Protons are taken up via the inlet half-channel and released through the outlet half-channel, following a Grotthuss mechanism. The sequence is that of ATP synthase F(0) complex subunit a from Osphranter robustus (Wallaroo).